Consider the following 251-residue polypeptide: uncharacterized protein (251 aa).

The 149-residue stretch at 4–152 (IEITKDNIED…YFQLMALTWN (149 aa)) folds into the N-acetyltransferase domain.

This sequence belongs to the acetyltransferase family.

This is an uncharacterized protein from Bacillus subtilis (strain 168).